Here is a 387-residue protein sequence, read N- to C-terminus: Phosphoglycerate kinase (387 aa).

Substrate contacts are provided by residues 21–23 (DLN), Arg-36, 59–62 (HLGR), Arg-113, and Arg-146. ATP-binding positions include Lys-197, Glu-314, and 340–343 (GGDT).

This sequence belongs to the phosphoglycerate kinase family. As to quaternary structure, monomer.

It is found in the cytoplasm. The catalysed reaction is (2R)-3-phosphoglycerate + ATP = (2R)-3-phospho-glyceroyl phosphate + ADP. It participates in carbohydrate degradation; glycolysis; pyruvate from D-glyceraldehyde 3-phosphate: step 2/5. In Aliivibrio fischeri (strain ATCC 700601 / ES114) (Vibrio fischeri), this protein is Phosphoglycerate kinase.